The following is a 118-amino-acid chain: Small ribosomal subunit protein uS13 (118 aa).

The interval 92–118 (RRSLPVRGQRTKTNARTRKGPRKPIKK) is disordered.

Belongs to the universal ribosomal protein uS13 family. As to quaternary structure, part of the 30S ribosomal subunit. Forms a loose heterodimer with protein S19. Forms two bridges to the 50S subunit in the 70S ribosome.

Located at the top of the head of the 30S subunit, it contacts several helices of the 16S rRNA. In the 70S ribosome it contacts the 23S rRNA (bridge B1a) and protein L5 of the 50S subunit (bridge B1b), connecting the 2 subunits; these bridges are implicated in subunit movement. Contacts the tRNAs in the A and P-sites. The chain is Small ribosomal subunit protein uS13 from Acinetobacter baumannii (strain AB307-0294).